The following is a 394-amino-acid chain: MTQLETRTEPMVVNFGPHHPSMHGVLRLVVTLDGEDVVDCEPVIGYLHRGMEKIAENRTNVMFVPYVSRMDYAAGMFYEAVVVNAPEKLANIPVPKRASYIRVLMLELNRIANHLLWLGPFLADVGAQTPFFYIFREREMIYDLWEAATGQRLINNNYFRIGGVAADLPWGWLEKCRDFCDWFAPKIDEYEKLITNNPIFRRRIEGLGTIETKDAINWSLSGPMLRASGVPWDLRKVDHYECYDDFDWQVAWEKEGDCFARYRVRIEEMRQSLKILRQACDMIPGGPTENLEAKRLNEGKGSEAAGFDFQYVAKKVAPTFKIPNGELYTRLESGKGEIGVFLQGNNDVTPWRFKIRAADSNNLQILPHILKGHKVADIMAILGSIDVIMGSVDR.

The protein belongs to the complex I 49 kDa subunit family. In terms of assembly, NDH-1 can be composed of about 15 different subunits; different subcomplexes with different compositions have been identified which probably have different functions.

Its subcellular location is the cellular thylakoid membrane. It catalyses the reaction a plastoquinone + NADH + (n+1) H(+)(in) = a plastoquinol + NAD(+) + n H(+)(out). It carries out the reaction a plastoquinone + NADPH + (n+1) H(+)(in) = a plastoquinol + NADP(+) + n H(+)(out). In terms of biological role, NDH-1 shuttles electrons from an unknown electron donor, via FMN and iron-sulfur (Fe-S) centers, to quinones in the respiratory and/or the photosynthetic chain. The immediate electron acceptor for the enzyme in this species is believed to be plastoquinone. Couples the redox reaction to proton translocation, and thus conserves the redox energy in a proton gradient. Cyanobacterial NDH-1 also plays a role in inorganic carbon-concentration. In Synechococcus sp. (strain CC9902), this protein is NAD(P)H-quinone oxidoreductase subunit H.